Reading from the N-terminus, the 258-residue chain is Regulatory protein RecX (258 aa).

This sequence belongs to the RecX family.

It is found in the cytoplasm. Functionally, modulates RecA activity. The protein is Regulatory protein RecX of Streptococcus pyogenes serotype M5 (strain Manfredo).